A 483-amino-acid polypeptide reads, in one-letter code: MTTLAVLSVASELFPLIKTGGLADVAGALPAALRANDVAVTSLLPGYPAVLGGIEDPQQVHSFNELFGGTARLLAARCGDLDLFVLDAPHLYVRPGNPYVGPDGKDWPDNGLRFAALAQVGAALGQGLLPHYKPDVLHAHDWQTGLLPAYLKYSGRPGPKTVFTIHNLAFQGRFPYELLGRLGLPERAFGLDGIEYYGGIGYLKAGLQLADRITTVSPTYAAEIQGSEAGMGLDGLLRLRADRLSGILNGIDTDVWNPASDALISATYDVESIAARARNKKVLQARFGLKPEPGALLYGVISRLSWQKGLDLLLEALPQLIGGGAQLALLGSGDAELEQGYAAAARKYPGQVGAVIGYDEALAHQIQAGADALLVPSRFEPCGLTQLCALRYGAVPVVARVGGLADTVVDANEMATATGVATGVQFAPVTTDALIKAFGKTRALFADVVAWRNLQINGMTTDVSWKNPAQHYAKLYRDLVAER.

Lys-18 provides a ligand contact to ADP-alpha-D-glucose.

This sequence belongs to the glycosyltransferase 1 family. Bacterial/plant glycogen synthase subfamily.

The catalysed reaction is [(1-&gt;4)-alpha-D-glucosyl](n) + ADP-alpha-D-glucose = [(1-&gt;4)-alpha-D-glucosyl](n+1) + ADP + H(+). It participates in glycan biosynthesis; glycogen biosynthesis. Synthesizes alpha-1,4-glucan chains using ADP-glucose. The sequence is that of Glycogen synthase from Rhodopseudomonas palustris (strain ATCC BAA-98 / CGA009).